The chain runs to 426 residues: Dihydroorotase (426 aa).

Positions 58 and 60 each coordinate Zn(2+). Substrate is bound by residues 60–62 and Asn92; that span reads HLR. Positions 150, 177, and 230 each coordinate Zn(2+). Asn276 provides a ligand contact to substrate. A Zn(2+)-binding site is contributed by Asp303. Residue Asp303 is part of the active site. Residue His307 participates in substrate binding.

It belongs to the metallo-dependent hydrolases superfamily. DHOase family. Class I DHOase subfamily. Requires Zn(2+) as cofactor.

It catalyses the reaction (S)-dihydroorotate + H2O = N-carbamoyl-L-aspartate + H(+). Its pathway is pyrimidine metabolism; UMP biosynthesis via de novo pathway; (S)-dihydroorotate from bicarbonate: step 3/3. In terms of biological role, catalyzes the reversible cyclization of carbamoyl aspartate to dihydroorotate. The polypeptide is Dihydroorotase (Acetivibrio thermocellus (strain ATCC 27405 / DSM 1237 / JCM 9322 / NBRC 103400 / NCIMB 10682 / NRRL B-4536 / VPI 7372) (Clostridium thermocellum)).